We begin with the raw amino-acid sequence, 281 residues long: Proteasome subunit beta (281 aa).

Positions 1 to 53 (MEANTRSTGRLPAAFLTPGSSSFMDFLSDQSPEMLPGNRSLPPLQGAVEAPHG) are cleaved as a propeptide — removed in mature form; by autocatalysis. Catalysis depends on T54, which acts as the Nucleophile.

It belongs to the peptidase T1B family. The 20S proteasome core is composed of 14 alpha and 14 beta subunits that assemble into four stacked heptameric rings, resulting in a barrel-shaped structure. The two inner rings, each composed of seven catalytic beta subunits, are sandwiched by two outer rings, each composed of seven alpha subunits. The catalytic chamber with the active sites is on the inside of the barrel. Has a gated structure, the ends of the cylinder being occluded by the N-termini of the alpha-subunits. Is capped by the proteasome-associated ATPase, ARC.

The protein resides in the cytoplasm. The enzyme catalyses Cleavage of peptide bonds with very broad specificity.. It participates in protein degradation; proteasomal Pup-dependent pathway. The formation of the proteasomal ATPase ARC-20S proteasome complex, likely via the docking of the C-termini of ARC into the intersubunit pockets in the alpha-rings, may trigger opening of the gate for substrate entry. Interconversion between the open-gate and close-gate conformations leads to a dynamic regulation of the 20S proteasome proteolysis activity. In terms of biological role, component of the proteasome core, a large protease complex with broad specificity involved in protein degradation. In Streptomyces griseus subsp. griseus (strain JCM 4626 / CBS 651.72 / NBRC 13350 / KCC S-0626 / ISP 5235), this protein is Proteasome subunit beta.